A 96-amino-acid chain; its full sequence is MEQAPEDQGPQREPYNEWTLELLEELKREAVRHFPRPWLHGLGQHIYETYGDTWTGVEAIIRILQRLLFVHFRIGCQHSRIGILRQRRARNGASRS.

The interval 1–42 (MEQAPEDQGPQREPYNEWTLELLEELKREAVRHFPRPWLHGL) is homooligomerization. Phosphoserine; by host is present on residues Ser-79, Ser-94, and Ser-96.

This sequence belongs to the HIV-1 VPR protein family. In terms of assembly, homooligomer, may form homodimer. Interacts with p6-gag region of the Pr55 Gag precursor protein through a (Leu-X-X)4 motif near the C-terminus of the P6gag protein. Interacts with host UNG. May interact with host RAD23A/HHR23A. Interacts with host VPRBP/DCAF1, leading to hijack the CUL4A-RBX1-DDB1-DCAF1/VPRBP complex, mediating ubiquitination of host proteins such as TERT and ZGPAT and arrest of the cell cycle in G2 phase. Post-translationally, phosphorylated on several residues by host. These phosphorylations regulate VPR activity for the nuclear import of the HIV-1 pre-integration complex.

The protein localises to the virion. It localises to the host nucleus. Its subcellular location is the host extracellular space. Its function is as follows. During virus replication, may deplete host UNG protein, and incude G2-M cell cycle arrest. Acts by targeting specific host proteins for degradation by the 26S proteasome, through association with the cellular CUL4A-DDB1 E3 ligase complex by direct interaction with host VPRPB/DCAF-1. Cell cycle arrest reportedly occurs within hours of infection and is not blocked by antiviral agents, suggesting that it is initiated by the VPR carried into the virion. Additionally, VPR induces apoptosis in a cell cycle dependent manner suggesting that these two effects are mechanistically linked. Detected in the serum and cerebrospinal fluid of AIDS patient, VPR may also induce cell death to bystander cells. Functionally, during virus entry, plays a role in the transport of the viral pre-integration (PIC) complex to the host nucleus. This function is crucial for viral infection of non-dividing macrophages. May act directly at the nuclear pore complex, by binding nucleoporins phenylalanine-glycine (FG)-repeat regions. In Human immunodeficiency virus type 1 group M subtype C (isolate 92BR025) (HIV-1), this protein is Protein Vpr.